A 204-amino-acid chain; its full sequence is MQQAITQQEKAQPKSVLPNRPEEVWSYIKALETRTVPVDNNPASVEQNMRLTEEQRQVLIQIERDQKAADEARKLAEQQRIEDATRTQSKTTEDMKNTEAEIVKSESIKKQDSQKIESAKKVEQIKTVNNVRDSKKFGLQCGAFKNRAQAENLQGRLQMTGLNAQIQTNGEWNRVRVASFDTRELAVQAQSRAKTVTDCVVIGM.

Residues 1–10 (MQQAITQQEK) are compositionally biased toward polar residues. 2 disordered regions span residues 1–20 (MQQAITQQEKAQPKSVLPNR) and 70–99 (DEARKLAEQQRIEDATRTQSKTTEDMKNTE). Residues 131 to 204 (VRDSKKFGLQ…TVTDCVVIGM (74 aa)) enclose the SPOR domain.

The protein to E.coli FtsN repeat regions.

This is an uncharacterized protein from Haemophilus influenzae (strain ATCC 51907 / DSM 11121 / KW20 / Rd).